Consider the following 87-residue polypeptide: Beta-mammal toxin Css4 (87 aa).

An N-terminal signal peptide occupies residues 1–19 (MNSLLMITACLALVGTVWA). An LCN-type CS-alpha/beta domain is found at 20–85 (KEGYLVNSYT…VWPLPNKTCN (66 aa)). Disulfide bonds link Cys31/Cys84, Cys35/Cys60, Cys44/Cys65, and Cys48/Cys67. Asn85 bears the Asparagine amide mark.

This sequence belongs to the long (4 C-C) scorpion toxin superfamily. Sodium channel inhibitor family. Beta subfamily. As to expression, expressed by the venom gland.

Its subcellular location is the secreted. Functionally, beta toxins bind voltage-independently at site-4 of sodium channels (Nav) and shift the voltage of activation toward more negative potentials thereby affecting sodium channel activation and promoting spontaneous and repetitive firing. This toxin is active only on mammals. The chain is Beta-mammal toxin Css4 from Centruroides suffusus (Durango bark scorpion).